The primary structure comprises 354 residues: Ornithine carbamoyltransferase, catabolic (354 aa).

Residues 67–70, Q94, R118, and 145–148 each bind carbamoyl phosphate; these read STRT and HPTQ. L-ornithine-binding positions include N177, D241, and 245-246; that span reads SM. Carbamoyl phosphate-binding positions include 284–285 and R329; that span reads CL.

It belongs to the aspartate/ornithine carbamoyltransferase superfamily. OTCase family.

It localises to the cytoplasm. It catalyses the reaction carbamoyl phosphate + L-ornithine = L-citrulline + phosphate + H(+). It participates in amino-acid degradation; L-arginine degradation via ADI pathway; carbamoyl phosphate from L-arginine: step 2/2. In terms of biological role, reversibly catalyzes the transfer of the carbamoyl group from carbamoyl phosphate (CP) to the N(epsilon) atom of ornithine (ORN) to produce L-citrulline. The protein is Ornithine carbamoyltransferase, catabolic (arcB) of Lactococcus lactis subsp. cremoris (Streptococcus cremoris).